The following is a 102-amino-acid chain: N(4)-acetylcytidine amidohydrolase (102 aa).

The region spanning 6 to 92 is the ASCH domain; the sequence is TFFGRFEADI…VIKAIYPGLD (87 aa). Residue K20 is the Proton acceptor of the active site. T23 acts as the Nucleophile in catalysis. Residue E73 is the Proton donor of the active site.

The protein belongs to the N(4)-acetylcytidine amidohydrolase family.

It catalyses the reaction N(4)-acetylcytidine + H2O = cytidine + acetate + H(+). The enzyme catalyses N(4)-acetyl-2'-deoxycytidine + H2O = 2'-deoxycytidine + acetate + H(+). It carries out the reaction N(4)-acetylcytosine + H2O = cytosine + acetate + H(+). Its function is as follows. Catalyzes the hydrolysis of N(4)-acetylcytidine (ac4C). The polypeptide is N(4)-acetylcytidine amidohydrolase (Yersinia pseudotuberculosis serotype O:1b (strain IP 31758)).